The primary structure comprises 841 residues: Neuronal tyrosine-phosphorylated phosphoinositide-3-kinase adapter 1 (841 aa).

Disordered stretches follow at residues 1–45 (MNLL…PGVR), 64–448 (PASQ…PAAL), 655–679 (RAWN…TSGI), 745–769 (RPCS…PLPP), and 812–833 (LPSW…RRQH). The span at 8-25 (TKLEWRQHKEEEAKRSSS) shows a compositional bias: basic and acidic residues. Residues 26-39 (KEVAPAGSAGPAAG) are compositionally biased toward low complexity. The involved in CYFIP1- and NCKAP1-binding stretch occupies residues 76–186 (SAMAPRSLSC…DESCPPGPSP (111 aa)). Residues 94-103 (VGGGPGGASG) are compositionally biased toward gly residues. Residues 114 to 123 (PPAKPRRHPS) are compositionally biased toward basic residues. The segment covering 167 to 176 (SPNTQLSVSF) has biased composition (polar residues). Residues 224-243 (FRGGGRSGGGLAGPPLGGGG) show a composition bias toward gly residues. Over residues 252–261 (SDSEESEAIY) the composition is skewed to acidic residues. A compositionally biased stretch (pro residues) spans 279-295 (GPPPLTATSPPQQPHAL). The span at 759–769 (PALPLPLPLPP) shows a compositional bias: pro residues.

It belongs to the NYAP family. Interacts with ACOT9, ARHGAP26 and PIK3R2. Interacts with components of the WAVE1 complex, CYFIP1 and NCKAP1; this interaction mediates PI3K-WAVE1 association and actin cytoskeleton remodeling. Post-translationally, phosphorylated on tyrosine residues by FYN upon stimulation with CNTN5.

Activates PI3K and concomitantly recruits the WAVE1 complex to the close vicinity of PI3K and regulates neuronal morphogenesis. In Homo sapiens (Human), this protein is Neuronal tyrosine-phosphorylated phosphoinositide-3-kinase adapter 1 (NYAP1).